The following is a 338-amino-acid chain: P2Y purinoceptor 14 (338 aa).

Over 1-29 (MNNSTTTDPPNQPCSWNTLITKQIIPVLY) the chain is Extracellular. N-linked (GlcNAc...) asparagine glycans are attached at residues Asn-2 and Asn-3. Residues 30–50 (GMVFITGLLLNGISGWIFFYV) traverse the membrane as a helical segment. The Cytoplasmic portion of the chain corresponds to 51–55 (PSSKS). Residues 56-76 (FIIYLKNIVVADFLMGLTFPF) form a helical membrane-spanning segment. Topologically, residues 77-96 (KVLGDSGLGPWQVNVFVCRV) are extracellular. Residues Cys-94 and Cys-172 are joined by a disulfide bond. Residues 97–117 (SAVIFYVNMYVSIVFFGLISF) traverse the membrane as a helical segment. At 118–139 (DRYYKIVKPLLTSIVQSVNYSK) the chain is on the cytoplasmic side. A helical transmembrane segment spans residues 140–160 (LLSVLVWMLMLLLAVPNIILT). The Extracellular segment spans residues 161-188 (NQGVKEVTKIQCMELKNELGRKWHKASN). Residues 189–209 (YIFVSIFWVVFLLLIVFYTAI) traverse the membrane as a helical segment. Residues 210–234 (TRKIFKSHLKSRKNSTSVKRKSSRN) lie on the Cytoplasmic side of the membrane. A helical membrane pass occupies residues 235 to 255 (IFSIVLVFVVCFVPYHIARIP). Residues 256-278 (YTKSQTEGHYSCRTKETLLYAKE) lie on the Extracellular side of the membrane. A helical membrane pass occupies residues 279 to 299 (FTLLLSAANVCLDPIIYFFLC). At 300–338 (QPFREVLNKKLHMSLKVQNDLEVSKTKRENAIHESTDTL) the chain is on the cytoplasmic side.

Belongs to the G-protein coupled receptor 1 family.

It is found in the cell membrane. Receptor for UDP-glucose coupled to G-proteins. The sequence is that of P2Y purinoceptor 14 (P2ry14) from Mus musculus (Mouse).